The sequence spans 307 residues: Cyclin-dependent kinase 5 activator 1 (307 aa).

Gly2 is lipidated: N-myristoyl glycine. The residue at position 8 (Ser8) is a Phosphoserine; by CDK5. Positions 97 to 133 (TFAQPPPAQPPAPPASQLSGSQTGVSSSVKKAPHPAI) are disordered. Positions 100–110 (QPPPAQPPAPP) are enriched in pro residues. The segment covering 112-125 (SQLSGSQTGVSSSV) has biased composition (polar residues). At Thr138 the chain carries Phosphothreonine; by CDK5.

This sequence belongs to the cyclin-dependent kinase 5 activator family. Heterodimer composed of a catalytic subunit CDK5 and a regulatory subunit CDK5R1 (p25) and macromolecular complex composed of at least CDK5, CDK5R1 (p35) and CDK5RAP1 or CDK5RAP2 or CDK5RAP3. Only the heterodimer shows kinase activity. Interacts with EPHA4 and NGEF; may mediate the activation of NGEF by EPHA4. Interacts with RASGRF2. The complex p35/CDK5 interacts with CLOCK. Post-translationally, the p35 form is proteolytically cleaved by calpain, giving rise to the p25 form. P35 has a 5 to 10 fold shorter half-life compared to p25. The conversion results in deregulation of the CDK5 kinase: p25/CDK5 kinase displays an increased and altered tau phosphorylation in comparison to the p35/CDK5 kinase in vivo. Myristoylated. A proper myristoylation signal is essential for the proper distribution of p35. In terms of processing, phosphorylation at Ser-8 and Thr-138 by CDK5 prevents calpain-mediated proteolysis. Post-translationally, ubiquitinated, leading to its degradation: degradation of p35 by proteasome results in down-regulation of CDK5 activity. During this process, CDK5 phosphorylates p35 and induces its ubiquitination and subsequent degradation. Ubiquitinated by the CRL2(FEM1B) complex, which recognizes the -Gly-Leu-Asp-Arg C-degron at the C-terminus, leading to its degradation. As to expression, brain and neuron specific.

It localises to the cell membrane. The protein resides in the cell projection. It is found in the neuron projection. Its subcellular location is the nucleus. The protein localises to the cytoplasm. It localises to the perinuclear region. The protein resides in the perikaryon. In terms of biological role, p35 is a neuron specific activator of CDK5. The complex p35/CDK5 is required for neurite outgrowth and cortical lamination. Involved in dendritic spine morphogenesis by mediating the EFNA1-EPHA4 signaling. Activator of TPKII. The complex p35/CDK5 participates in the regulation of the circadian clock by modulating the function of CLOCK protein: phosphorylates CLOCK at 'Thr-451' and 'Thr-461' and regulates the transcriptional activity of the CLOCK-BMAL1 heterodimer in association with altered stability and subcellular distribution. This Rattus norvegicus (Rat) protein is Cyclin-dependent kinase 5 activator 1 (Cdk5r1).